The following is a 199-amino-acid chain: Recombination protein RecR (199 aa).

The segment at 57–72 adopts a C4-type zinc-finger fold; sequence CQSCRTYTEESLCPIC. One can recognise a Toprim domain in the interval 81-176; that stretch reads STICVVETPA…VISRIAHGVP (96 aa).

The protein belongs to the RecR family.

May play a role in DNA repair. It seems to be involved in an RecBC-independent recombinational process of DNA repair. It may act with RecF and RecO. This Shewanella sp. (strain MR-4) protein is Recombination protein RecR.